A 45-amino-acid polypeptide reads, in one-letter code: DNA replication protein repEB (45 aa).

Involved in T4 DNA replication. Important for the priming of leading strand DNA synthesis at oriE. Binds to ssDNA. The protein is DNA replication protein repEB (repEB) of Enterobacteria phage T4 (Bacteriophage T4).